A 363-amino-acid polypeptide reads, in one-letter code: Wortmanamides biosynthesis cluster protein C (363 aa).

7 helical membrane passes run 15 to 35 (FVTL…RFVA), 48 to 68 (WLAV…LMAI), 95 to 115 (IAGL…ILAF), 129 to 149 (ICIY…CIFQ), 175 to 195 (ILGG…LAMI), 210 to 230 (VTVL…KIAV), and 237 to 257 (LYAF…ALLC). Residues 293 to 312 (SSSKNSRKHGPYDSDQSPGP) form a disordered region. Asn321 carries N-linked (GlcNAc...) asparagine glycosylation. Residues 344-363 (SPITHPQAYSKQTTRQFDVV) form a disordered region.

This sequence belongs to the SAT4 family.

Its subcellular location is the membrane. It participates in secondary metabolite biosynthesis. Its function is as follows. Part of the gene cluster that mediates the biosynthesis of wortmanamides A and B, reduced long-chain polyketides amidated with a specific omega-amino acid, 5-aminopentanoic acid (5PA). The PKS modules of TwmB are involved in the synthesis of the polyketide backbone, whereas the non-canonical C domain of TwmB is a bonafide condensation domain that specifically selects 5PA and catalyzes amidation to release polyketide chain. The C domain clearly prefers C16 and C18 fatty acyl substrates, which is consistent with simultaneous formation of both octaketide and nonaketide acyl amides wortmanamides A and B. Because TwmB lacks a designated enoylreductase (ER) domain, the required activity is provided the enoyl reductase TwmE. The roles of the remaining enzymes have still to be clarified. In Talaromyces wortmannii (Penicillium wortmannii), this protein is Wortmanamides biosynthesis cluster protein C.